The following is a 652-amino-acid chain: tRNA 5-methylaminomethyl-2-thiouridine biosynthesis bifunctional protein MnmC (652 aa).

A tRNA (mnm(5)s(2)U34)-methyltransferase region spans residues 1 to 235; that stretch reads MPDRLVPATL…EPALRVGEYA (235 aa). The FAD-dependent cmnm(5)s(2)U34 oxidoreductase stretch occupies residues 259–652; that stretch reads IGAGLAGCAV…IRALRGRQIG (394 aa).

This sequence in the N-terminal section; belongs to the methyltransferase superfamily. tRNA (mnm(5)s(2)U34)-methyltransferase family. It in the C-terminal section; belongs to the DAO family. FAD serves as cofactor.

The protein localises to the cytoplasm. It carries out the reaction 5-aminomethyl-2-thiouridine(34) in tRNA + S-adenosyl-L-methionine = 5-methylaminomethyl-2-thiouridine(34) in tRNA + S-adenosyl-L-homocysteine + H(+). In terms of biological role, catalyzes the last two steps in the biosynthesis of 5-methylaminomethyl-2-thiouridine (mnm(5)s(2)U) at the wobble position (U34) in tRNA. Catalyzes the FAD-dependent demodification of cmnm(5)s(2)U34 to nm(5)s(2)U34, followed by the transfer of a methyl group from S-adenosyl-L-methionine to nm(5)s(2)U34, to form mnm(5)s(2)U34. This chain is tRNA 5-methylaminomethyl-2-thiouridine biosynthesis bifunctional protein MnmC, found in Burkholderia ambifaria (strain MC40-6).